We begin with the raw amino-acid sequence, 772 residues long: Gelsolin (772 aa).

Positions 1-17 (LGALVVALCALSPPARA) are cleaved as a signal peptide. The propeptide occupies 18–33 (ATASRGAPQARAPQGR). The interval 19 to 38 (TASRGAPQARAPQGRVSPMR) is disordered. Positions 41-166 (TMVVEHPEFL…YKKGGVASGF (126 aa)) are actin-severing. A Gelsolin-like 1 repeat occupies 66–148 (FDLVPVPPNL…VQGFESATFL (83 aa)). Residue Tyr76 is modified to Phosphotyrosine. Residues Gly82, Asp83, Glu114, Asp126, Gly131, and Ala133 each contribute to the Ca(2+) site. The segment at 113 to 116 (DESG) is actin-actin interfilament contact point. 152–159 (KSGLKYKK) is a binding site for a 1,2-diacyl-sn-glycero-3-phospho-(1D-myo-inositol-4,5-bisphosphate). Val162 is a Ca(2+) binding site. Residue 178 to 186 (RLFQVKGRR) participates in a 1,2-diacyl-sn-glycero-3-phospho-(1D-myo-inositol-4,5-bisphosphate) binding. A Gelsolin-like 2 repeat occupies 188–260 (VRATEVPVSW…SEEDAEPAGM (73 aa)). The Ca(2+) site is built by Gly203 and Asp204. The cysteines at positions 205 and 218 are disulfide-linked. Glu226, Asp276, Glu319, Asp320, and Glu344 together coordinate Ca(2+). The stretch at 307–379 (DENPFAQGAL…LPEGGETPLF (73 aa)) is one Gelsolin-like 3 repeat. Phosphotyrosine is present on residues Tyr399 and Tyr455. The segment at 424–772 (AAQHGMDDDG…LDRAIAELAA (349 aa)) is actin-binding, Ca-sensitive. Residues 445 to 526 (SNKVPVDPAT…VQGKEPAHLM (82 aa)) form a Gelsolin-like 4 repeat. 7 residues coordinate Ca(2+): Gly461, Asp462, Glu492, Asp504, Gly509, Pro511, and Thr541. The stretch at 567-632 (RAVEVIPKAG…AEGSEPDSFW (66 aa)) is one Gelsolin-like 5 repeat. An N6-acetyllysine modification is found at Lys574. Asn581 and Asp582 together coordinate Ca(2+). Tyr593 is subject to Phosphotyrosine. Residue Glu604 coordinates Ca(2+). Tyr641 is subject to Phosphotyrosine. The stretch at 671–746 (VEEVPGELMQ…VKQGFEPPSF (76 aa)) is one Gelsolin-like 6 repeat. The Ca(2+) site is built by Asp686, Asp687, and Glu709. Thr732 bears the Phosphothreonine mark.

It belongs to the villin/gelsolin family. In terms of assembly, binds to actin and to fibronectin. Identified in a complex composed of ACTA1, COBL, GSN and TMSB4X. Interacts with the inactive form of EIF2AK2/PKR. Interacts with FLII. In terms of processing, phosphorylated on tyrosine residues in vitro.

It localises to the cytoplasm. It is found in the cytoskeleton. The protein resides in the secreted. In terms of biological role, calcium-regulated, actin-modulating protein that binds to the plus (or barbed) ends of actin monomers or filaments, preventing monomer exchange (end-blocking or capping). It can promote the assembly of monomers into filaments (nucleation) as well as sever filaments already formed. Plays a role in ciliogenesis. This is Gelsolin (GSN) from Sus scrofa (Pig).